A 310-amino-acid polypeptide reads, in one-letter code: 2-methoxy-6-polyprenyl-1,4-benzoquinol methylase, mitochondrial (310 aa).

The N-terminal 6 residues, 1-6, are a transit peptide targeting the mitochondrion; the sequence is MAHMRS. Residues Thr-99, Asp-154, and 182–183 each bind S-adenosyl-L-methionine; that span reads DA.

It belongs to the class I-like SAM-binding methyltransferase superfamily. MenG/UbiE family. In terms of assembly, component of a multi-subunit COQ enzyme complex, composed of at least coq3, coq4, coq5, coq6, coq7 and coq9.

Its subcellular location is the mitochondrion inner membrane. The catalysed reaction is a 2-methoxy-6-(all-trans-polyprenyl)benzene-1,4-diol + S-adenosyl-L-methionine = a 5-methoxy-2-methyl-3-(all-trans-polyprenyl)benzene-1,4-diol + S-adenosyl-L-homocysteine + H(+). Its pathway is cofactor biosynthesis; ubiquinone biosynthesis. Methyltransferase required for the conversion of 2-polyprenyl-6-methoxy-1,4-benzoquinol (DDMQH2) to 2-polyprenyl-3-methyl-6-methoxy-1,4-benzoquinol (DMQH2). This Xenopus laevis (African clawed frog) protein is 2-methoxy-6-polyprenyl-1,4-benzoquinol methylase, mitochondrial.